A 141-amino-acid polypeptide reads, in one-letter code: Ly6/PLAUR domain-containing protein 1 (141 aa).

Positions 1–20 (MWVLGIAATFCGLFWLPGLA) are cleaved as a signal peptide. Disulfide bonds link cysteine 25–cysteine 54, cysteine 28–cysteine 37, cysteine 46–cysteine 71, cysteine 77–cysteine 100, cysteine 88–cysteine 97, and cysteine 101–cysteine 106. In terms of domain architecture, UPAR/Ly6 spans 25-108 (CYQCEEFQLN…SCCNTPLCNG (84 aa)). The N-linked (GlcNAc...) asparagine glycan is linked to asparagine 45. Residue glycine 115 is the site of GPI-anchor amidated glycine attachment. Residues 116-141 (SSASAIRPELFTTVLFFNLALCLAHC) constitute a propeptide, removed in mature form.

Interacts with CHRNA4 and nAChRs containing alpha-4:beta-2 (CHRNA4:CHRNB2) and alpha-7 (CHRNA7) subunits.

The protein resides in the cell membrane. Functionally, believed to act as a modulator of nicotinic acetylcholine receptors (nAChRs) activity. In vitro increases receptor desensitization and decreases affinity for ACh of alpha-4:beta-2-containing nAChRs. May play a role in the intracellular trafficking of alpha-4:beta-2 and alpha-7-containing nAChRs and may inhibit their expression at the cell surface. May be involved in the control of anxiety. The chain is Ly6/PLAUR domain-containing protein 1 (Lypd1) from Rattus norvegicus (Rat).